We begin with the raw amino-acid sequence, 342 residues long: Glyceraldehyde-3-phosphate dehydrogenase (342 aa).

Residues 12–13 (RI), D34, K78, and T120 each bind NAD(+). D-glyceraldehyde 3-phosphate is bound by residues 151–153 (SCT) and T182. Catalysis depends on C152, which acts as the Nucleophile. N183 contributes to the NAD(+) binding site. D-glyceraldehyde 3-phosphate is bound by residues R197, 210–211 (TG), and R233. N322 serves as a coordination point for NAD(+).

It belongs to the glyceraldehyde-3-phosphate dehydrogenase family. Homotetramer.

The protein localises to the cytoplasm. The catalysed reaction is D-glyceraldehyde 3-phosphate + phosphate + NAD(+) = (2R)-3-phospho-glyceroyl phosphate + NADH + H(+). It functions in the pathway carbohydrate degradation; glycolysis; pyruvate from D-glyceraldehyde 3-phosphate: step 1/5. Functionally, catalyzes the oxidative phosphorylation of glyceraldehyde 3-phosphate (G3P) to 1,3-bisphosphoglycerate (BPG) using the cofactor NAD. The first reaction step involves the formation of a hemiacetal intermediate between G3P and a cysteine residue, and this hemiacetal intermediate is then oxidized to a thioester, with concomitant reduction of NAD to NADH. The reduced NADH is then exchanged with the second NAD, and the thioester is attacked by a nucleophilic inorganic phosphate to produce BPG. This chain is Glyceraldehyde-3-phosphate dehydrogenase (gap), found in Aquifex aeolicus (strain VF5).